Reading from the N-terminus, the 147-residue chain is RecQ-mediated genome instability protein 2 (147 aa).

Residues 1-20 form a disordered region; that stretch reads MAAAADSFSGGPAGVRLPRS. Ala2 is modified (N-acetylalanine). Residue Ser7 is modified to Phosphoserine. The OB DNA-binding region spans 44-114; sequence SRAAAGRGPL…MGVVQACSPE (71 aa).

This sequence belongs to the RMI2 family. Component of the RMI complex, containing at least TOP3A, RMI1 and RMI2. The RMI complex interacts with BLM. In terms of processing, phosphorylated during mitosis.

It is found in the nucleus. Essential component of the RMI complex, a complex that plays an important role in the processing of homologous recombination intermediates. It is required to regulate sister chromatid segregation and to limit DNA crossover. Essential for the stability, localization, and function of BLM, TOP3A, and complexes containing BLM. In the RMI complex, it is required to target BLM to chromatin and stress-induced nuclear foci and mitotic phosphorylation of BLM. This Homo sapiens (Human) protein is RecQ-mediated genome instability protein 2 (RMI2).